Reading from the N-terminus, the 503-residue chain is Probable DNA ligase (503 aa).

Residue Glu210 coordinates ATP. Lys212 functions as the N6-AMP-lysine intermediate in the catalytic mechanism. ATP is bound by residues Arg217, Arg232, Glu261, Phe296, Arg367, and Lys373.

It belongs to the ATP-dependent DNA ligase family. Requires Mg(2+) as cofactor.

It carries out the reaction ATP + (deoxyribonucleotide)n-3'-hydroxyl + 5'-phospho-(deoxyribonucleotide)m = (deoxyribonucleotide)n+m + AMP + diphosphate.. Functionally, DNA ligase that seals nicks in double-stranded DNA during DNA replication, DNA recombination and DNA repair. This chain is Probable DNA ligase, found in Rhodococcus opacus (strain B4).